The following is a 271-amino-acid chain: Urease accessory protein UreD (271 aa).

The protein belongs to the UreD family. In terms of assembly, ureD, UreF and UreG form a complex that acts as a GTP-hydrolysis-dependent molecular chaperone, activating the urease apoprotein by helping to assemble the nickel containing metallocenter of UreC. The UreE protein probably delivers the nickel.

Its subcellular location is the cytoplasm. In terms of biological role, required for maturation of urease via the functional incorporation of the urease nickel metallocenter. The chain is Urease accessory protein UreD from Haemophilus influenzae (strain PittEE).